The primary structure comprises 1389 residues: Carboxypeptidase D (1389 aa).

Residues 1 to 25 (MAGAARGLLWAALSLCLLPEPLRAA) form the signal peptide. At 26–1308 (HIKKAEAAAA…ENRIFGLPRE (1283 aa)) the chain is on the extracellular side. The 338-residue stretch at 46–383 (RYLHAAELGQ…ESLLTFIEKV (338 aa)) folds into the Peptidase M14 1 domain. The tract at residues 95 to 133 (LPEARQDGEKKKKEEEEEEEEEEGEEGGGGALPGRPQVK) is disordered. Positions 96-108 (PEARQDGEKKKKE) are enriched in basic and acidic residues. Residues 109 to 120 (EEEEEEEEEGEE) show a composition bias toward acidic residues. His-139 and Glu-142 together coordinate Zn(2+). An N-linked (GlcNAc...) asparagine glycan is attached at Asn-172. Residues 188–235 (ERAREGDCGGGGGGGGEGGGEPGGRENSRGRDLNRSFPDQFGSAQPDL) are disordered. Gly residues predominate over residues 195-209 (CGGGGGGGGEGGGEP). A compositionally biased stretch (basic and acidic residues) spans 210–221 (GGRENSRGRDLN). A glycan (N-linked (GlcNAc...) asparagine) is linked at Asn-221. Zn(2+) is bound at residue His-260. Glu-353 (proton donor/acceptor) is an active-site residue. Asn-402, Asn-413, Asn-432, and Asn-472 each carry an N-linked (GlcNAc...) asparagine glycan. Residues 511–801 (RHHHFSDMEI…RSLLQFIKQV (291 aa)) enclose the Peptidase M14 2 domain. Zn(2+) is bound by residues His-573 and Glu-576. The segment at 614 to 639 (SMNPDGYEKSQEGDRGGTVGRNNSNN) is disordered. The span at 619-628 (GYEKSQEGDR) shows a compositional bias: basic and acidic residues. Residue Asn-635 is glycosylated (N-linked (GlcNAc...) asparagine). His-680 lines the Zn(2+) pocket. Glu-771 (proton donor/acceptor) is an active-site residue. 6 N-linked (GlcNAc...) asparagine glycosylation sites follow: Asn-820, Asn-876, Asn-958, Asn-981, Asn-1073, and Asn-1151. In terms of domain architecture, Peptidase M14 3 spans 935–1220 (RYRPYKDLSE…KSLLSMLVEV (286 aa)). The helical transmembrane segment at 1309 to 1329 (LVVTVAGASMSALVLTACIIW) threads the bilayer. Residues Cys-1326, Cys-1330, and Cys-1332 are each lipidated (S-palmitoyl cysteine). Residues 1330–1389 (CVCSIKSNRHKDGFPTLRQHHDDYEDEIRMMSTGSKKSLLSHEFQDETDTEEETLYSSKH) lie on the Cytoplasmic side of the membrane. A disordered region spans residues 1367–1389 (SLLSHEFQDETDTEEETLYSSKH).

It belongs to the peptidase M14 family. As to quaternary structure, binds to pre-S, hepatitis B virus large envelope protein, via the carboxypeptidase-like domain. Zn(2+) serves as cofactor. In terms of processing, the N-terminus is blocked. In terms of tissue distribution, expressed in liver, lung, kidney, heart, stomach, pancreas, spleen, gall bladder and intestine, but not in skeletal muscle.

It is found in the cell membrane. It catalyses the reaction Releases C-terminal Arg and Lys from polypeptides.. This Anas platyrhynchos (Mallard) protein is Carboxypeptidase D (CPD).